The sequence spans 155 residues: Protein phosphatase 1 regulatory subunit 17 (155 aa).

A disordered region spans residues 41–73 (KKKPRKGKNVQATLNVESDQKKPRRKDTPALHI). Over residues 58 to 69 (SDQKKPRRKDTP) the composition is skewed to basic and acidic residues. Residues threonine 68 and threonine 119 each carry the phosphothreonine; by PKG/PRKG1 modification.

Post-translationally, substrate for cGMP-dependent protein kinase. Phosphorylated by PRKG1 isoform alpha. Phosphorylation of Thr-68 and Thr-119 is required for its phosphatase activity. Substrate for cGMP-dependent protein kinase. Highly expressed in cerebellum.

Its function is as follows. Inhibits phosphatase activities of protein phosphatase 1 (PP1) and protein phosphatase 2A (PP2A) complexes. This Homo sapiens (Human) protein is Protein phosphatase 1 regulatory subunit 17 (PPP1R17).